The sequence spans 271 residues: Pyrroline-5-carboxylate reductase (271 aa).

The protein belongs to the pyrroline-5-carboxylate reductase family.

The protein localises to the cytoplasm. It catalyses the reaction L-proline + NADP(+) = (S)-1-pyrroline-5-carboxylate + NADPH + 2 H(+). The enzyme catalyses L-proline + NAD(+) = (S)-1-pyrroline-5-carboxylate + NADH + 2 H(+). The protein operates within amino-acid biosynthesis; L-proline biosynthesis; L-proline from L-glutamate 5-semialdehyde: step 1/1. In terms of biological role, catalyzes the reduction of 1-pyrroline-5-carboxylate (PCA) to L-proline. The chain is Pyrroline-5-carboxylate reductase from Staphylococcus epidermidis (strain ATCC 35984 / DSM 28319 / BCRC 17069 / CCUG 31568 / BM 3577 / RP62A).